Here is a 1212-residue protein sequence, read N- to C-terminus: DNA-directed RNA polymerase subunit beta' (1212 aa).

Zn(2+)-binding residues include C60, C62, C75, and C78. The Mg(2+) site is built by D450, D452, and D454. C819, C893, C900, and C903 together coordinate Zn(2+).

This sequence belongs to the RNA polymerase beta' chain family. As to quaternary structure, the RNAP catalytic core consists of 2 alpha, 1 beta, 1 beta' and 1 omega subunit. When a sigma factor is associated with the core the holoenzyme is formed, which can initiate transcription. It depends on Mg(2+) as a cofactor. Requires Zn(2+) as cofactor.

The catalysed reaction is RNA(n) + a ribonucleoside 5'-triphosphate = RNA(n+1) + diphosphate. In terms of biological role, DNA-dependent RNA polymerase catalyzes the transcription of DNA into RNA using the four ribonucleoside triphosphates as substrates. The sequence is that of DNA-directed RNA polymerase subunit beta' from Streptococcus uberis (strain ATCC BAA-854 / 0140J).